We begin with the raw amino-acid sequence, 316 residues long: Epiphycan (316 aa).

An N-terminal signal peptide occupies residues M1 to T23. S98 is a glycosylation site (O-linked (Xyl...) (dermatan sulfate) serine). The 38-residue stretch at V100–K137 folds into the LRRNT domain. A disulfide bond links C112 and C124. 6 LRR repeats span residues N138 to N159, N162 to R183, Q186 to L207, E232 to E252, S253 to K274, and A284 to Y304. C273 and C306 are oxidised to a cystine. N296 carries an N-linked (GlcNAc...) asparagine glycan.

The protein belongs to the small leucine-rich proteoglycan (SLRP) family. SLRP class III subfamily. Post-translationally, the O-linked glycosaminoglycan chain(s) are dermatan sulfate. In terms of tissue distribution, preferentially expressed in flattened chondrocytes of developing chick limb cartilage. Also found in the cartilage peripheral zone bordering with bone marrow cavity.

It localises to the secreted. Its subcellular location is the extracellular space. It is found in the extracellular matrix. Functionally, may have a role in bone formation and also in establishing the ordered structure of cartilage through matrix organization. The chain is Epiphycan (EPYC) from Gallus gallus (Chicken).